The primary structure comprises 656 residues: Choline transporter-like protein 3 (656 aa).

A helical membrane pass occupies residues 37–57 (WLVLFFLFWTGLVFIMGYSVV). 2 N-linked (GlcNAc...) asparagine glycosylation sites follow: N141 and N154. A run of 5 helical transmembrane segments spans residues 216-236 (DTIL…LFAF), 242-262 (LLIH…CGVL), 288-308 (LAFA…IFTL), 337-357 (LWTC…LLSL), and 381-401 (YMWW…LACQ). 2 N-linked (GlcNAc...) asparagine glycosylation sites follow: N506 and N524. A helical transmembrane segment spans residues 537-557 (FVIFLGKVLVVCFSIFGGLMA). A glycan (N-linked (GlcNAc...) asparagine) is linked at N559. The helical transmembrane segment at 566 to 586 (VWAIPLLLVAFFACVVAHSFL) threads the bilayer. The tract at residues 634–656 (AKSQGQKDALPNEEGTELQPIVR) is disordered.

Belongs to the CTL (choline transporter-like) family.

The protein resides in the membrane. This is Choline transporter-like protein 3 (Slc44a3) from Mus musculus (Mouse).